Reading from the N-terminus, the 622-residue chain is Low affinity potassium transport system protein Kup (622 aa).

12 helical membrane passes run 9–29, 49–69, 101–121, 137–157, 163–183, 213–233, 247–267, 276–296, 337–357, 363–383, 395–415, and 419–439; these read LPAL…TSPL, VFGF…IKYI, VLVI…VITP, PQLD…LFVI, GMVG…LAVL, VSFI…ALYA, WFSV…ALLL, PFFL…ATLA, IYIP…IVSF, LAAA…ILSA, LFVG…FSAN, and IVSG…VMTT.

The protein belongs to the HAK/KUP transporter (TC 2.A.72) family.

The protein localises to the cell inner membrane. It catalyses the reaction K(+)(in) + H(+)(in) = K(+)(out) + H(+)(out). Responsible for the low-affinity transport of potassium into the cell. Likely operates as a K(+):H(+) symporter. In Klebsiella pneumoniae subsp. pneumoniae (strain ATCC 700721 / MGH 78578), this protein is Low affinity potassium transport system protein Kup.